The following is a 171-amino-acid chain: Adenine phosphoribosyltransferase (171 aa).

It belongs to the purine/pyrimidine phosphoribosyltransferase family. In terms of assembly, homodimer.

The protein resides in the cytoplasm. The enzyme catalyses AMP + diphosphate = 5-phospho-alpha-D-ribose 1-diphosphate + adenine. It participates in purine metabolism; AMP biosynthesis via salvage pathway; AMP from adenine: step 1/1. In terms of biological role, catalyzes a salvage reaction resulting in the formation of AMP, that is energically less costly than de novo synthesis. The chain is Adenine phosphoribosyltransferase from Rhodospirillum rubrum (strain ATCC 11170 / ATH 1.1.1 / DSM 467 / LMG 4362 / NCIMB 8255 / S1).